The primary structure comprises 357 residues: MRIIITGGGTGGHIYPALAFLKYLKQEEPDTEVLYIGTKKGLESKIVPRAGIQLKTVDIQGLRRSLSPQNIKTAYKFFKSVSDAKKIMKDFKPDVVLGTGGYVAGPVVFAAAQLKIPTIIHEGNSFPGITNRFLAKKVDRIAVGFHAAEQYFPSEKTSFTGNPRAQEVADAAAQVEKFEQPTVVIFGGSRGALKLNNAFIEALPELAKRSFKTVYASGEIYYDDYKETFDQYKENPNLDIRPYINNMTELLAKSQLFLGRSGSTTIAEVTALGLPAVYVPSPNVTADQQTKNAQEYVDQGAAIIVKDEELNGQSLVEAISDILENTEKYQEMQRASLKAGVPDASQRLYNLVKEISN.

UDP-N-acetyl-alpha-D-glucosamine-binding positions include 10 to 12 (TGG), N124, S189, I244, and Q289.

This sequence belongs to the glycosyltransferase 28 family. MurG subfamily.

It is found in the cell membrane. It carries out the reaction Mur2Ac(oyl-L-Ala-gamma-D-Glu-L-Lys-D-Ala-D-Ala)-di-trans,octa-cis-undecaprenyl diphosphate + UDP-N-acetyl-alpha-D-glucosamine = beta-D-GlcNAc-(1-&gt;4)-Mur2Ac(oyl-L-Ala-gamma-D-Glu-L-Lys-D-Ala-D-Ala)-di-trans,octa-cis-undecaprenyl diphosphate + UDP + H(+). It participates in cell wall biogenesis; peptidoglycan biosynthesis. Its function is as follows. Cell wall formation. Catalyzes the transfer of a GlcNAc subunit on undecaprenyl-pyrophosphoryl-MurNAc-pentapeptide (lipid intermediate I) to form undecaprenyl-pyrophosphoryl-MurNAc-(pentapeptide)GlcNAc (lipid intermediate II). This is UDP-N-acetylglucosamine--N-acetylmuramyl-(pentapeptide) pyrophosphoryl-undecaprenol N-acetylglucosamine transferase from Lactococcus lactis subsp. cremoris (strain MG1363).